Reading from the N-terminus, the 183-residue chain is Ribosome-recycling factor (183 aa).

It belongs to the RRF family.

The protein localises to the cytoplasm. Its function is as follows. Responsible for the release of ribosomes from messenger RNA at the termination of protein biosynthesis. May increase the efficiency of translation by recycling ribosomes from one round of translation to another. This Mycoplasma genitalium (strain ATCC 33530 / DSM 19775 / NCTC 10195 / G37) (Mycoplasmoides genitalium) protein is Ribosome-recycling factor.